Reading from the N-terminus, the 157-residue chain is Catabolic 3-dehydroquinase (157 aa).

Tyr-27 (proton acceptor) is an active-site residue. 3 residues coordinate substrate: Asn-80, His-86, and Asp-93. His-106 functions as the Proton donor in the catalytic mechanism. Residues 107 to 108 (VS) and Arg-117 contribute to the substrate site.

The protein belongs to the type-II 3-dehydroquinase family. Homododecamer. Adopts a ring-like structure, composed of an arrangement of two hexameric rings stacked on top of one another.

It catalyses the reaction 3-dehydroquinate = 3-dehydroshikimate + H2O. The protein operates within aromatic compound metabolism; 3,4-dihydroxybenzoate biosynthesis; 3,4-dihydroxybenzoate from 3-dehydroquinate: step 1/2. Is involved in the catabolism of quinate. Allows the utilization of quinate as carbon source via the beta-ketoadipate pathway. The sequence is that of Catabolic 3-dehydroquinase from Pyricularia oryzae (strain 70-15 / ATCC MYA-4617 / FGSC 8958) (Rice blast fungus).